The sequence spans 934 residues: Translation initiation factor IF-2 (934 aa).

Residues 54 to 323 form a disordered region; the sequence is AQESKPTTPP…KRQKRNEYEA (270 aa). Composition is skewed to low complexity over residues 80 to 154, 185 to 197, 206 to 231, and 238 to 250; these read PKPG…AGKP, RGGA…PRPG, GQAP…PGAA, and RPSP…TPSP. Over residues 260–303 the composition is skewed to gly residues; it reads GFGGGRGRGGRPGGPGGPGGPGGPGPRGGRGGRRGGTAGAFGRP. The span at 308–317 shows a compositional bias: basic residues; sequence RRGRKSKRQK. A tr-type G domain is found at 430 to 602; it reads QRPPVVTVMG…VLLTADASLD (173 aa). A G1 region spans residues 439–446; it reads GHVDHGKT. 439-446 is a GTP binding site; it reads GHVDHGKT. Residues 464–468 form a G2 region; sequence GITQH. Residues 489 to 492 are G3; it reads DTPG. Residues 489–493 and 543–546 contribute to the GTP site; these read DTPGH and NKID. Residues 543–546 are G4; that stretch reads NKID. The G5 stretch occupies residues 579–581; the sequence is SAK.

It belongs to the TRAFAC class translation factor GTPase superfamily. Classic translation factor GTPase family. IF-2 subfamily.

The protein resides in the cytoplasm. Its function is as follows. One of the essential components for the initiation of protein synthesis. Protects formylmethionyl-tRNA from spontaneous hydrolysis and promotes its binding to the 30S ribosomal subunits. Also involved in the hydrolysis of GTP during the formation of the 70S ribosomal complex. This chain is Translation initiation factor IF-2, found in Corynebacterium urealyticum (strain ATCC 43042 / DSM 7109).